We begin with the raw amino-acid sequence, 291 residues long: Quinol oxidase subunit 2 (291 aa).

Positions methionine 1–lysine 28 are cleaved as a signal peptide. 2 helical membrane-spanning segments follow: residues serine 49–isoleucine 69 and leucine 91–valine 111.

Belongs to the cytochrome c oxidase subunit 2 family.

It localises to the cell membrane. It carries out the reaction 2 a quinol + O2 = 2 a quinone + 2 H2O. Catalyzes quinol oxidation with the concomitant reduction of oxygen to water. Subunit II transfers the electrons from a quinol to the binuclear center of the catalytic subunit I. This is Quinol oxidase subunit 2 from Bacillus anthracis.